Reading from the N-terminus, the 122-residue chain is Large ribosomal subunit protein uL14 (122 aa).

It belongs to the universal ribosomal protein uL14 family. Part of the 50S ribosomal subunit. Forms a cluster with proteins L3 and L19. In the 70S ribosome, L14 and L19 interact and together make contacts with the 16S rRNA in bridges B5 and B8.

Its function is as follows. Binds to 23S rRNA. Forms part of two intersubunit bridges in the 70S ribosome. This Borreliella afzelii (strain PKo) (Borrelia afzelii) protein is Large ribosomal subunit protein uL14.